We begin with the raw amino-acid sequence, 170 residues long: Thialysine N-epsilon-acetyltransferase (170 aa).

In terms of domain architecture, N-acetyltransferase spans 4 to 166 (TRIREARESD…FRFEGEAMRE (163 aa)). 27-28 (FE) is a substrate binding site. Position 29 is an N6-acetyllysine (lysine 29). Glutamate 92 contributes to the substrate binding site. Residues 94 to 96 (IYV), 102 to 107 (GQGIGT), 133 to 135 (NKK), and tyrosine 140 contribute to the acetyl-CoA site. Tyrosine 140 serves as the catalytic Proton donor. Substrate is bound at residue glutamate 152.

It belongs to the acetyltransferase family. In terms of assembly, homodimer.

Its subcellular location is the cytoplasm. It catalyses the reaction S-(2-aminoethyl)-L-cysteine + acetyl-CoA = S-(2-acetamidoethyl)-L-cysteine + CoA + H(+). It carries out the reaction an alkane-alpha,omega-diamine + acetyl-CoA = an N-acetylalkane-alpha,omega-diamine + CoA + H(+). Catalyzes the N-acetylation of the amino acid thialysine (S-(2-aminoethyl)-L-cysteine), a L-lysine analog with the 4-methylene group substituted with a sulfur. May also catalyze acetylation of polyamines, such as norspermidine, spermidine or spermine. However, ability to acetylate polyamines is weak, suggesting that it does not act as a diamine acetyltransferase in vivo. This Mus musculus (Mouse) protein is Thialysine N-epsilon-acetyltransferase.